Here is a 189-residue protein sequence, read N- to C-terminus: dCTP deaminase (189 aa).

Residues 112-117, 136-138, Q157, Y171, and Q181 contribute to the dCTP site; these read KSTYAR and TLE. The Proton donor/acceptor role is filled by E138.

The protein belongs to the dCTP deaminase family. As to quaternary structure, homotrimer.

It catalyses the reaction dCTP + H2O + H(+) = dUTP + NH4(+). It functions in the pathway pyrimidine metabolism; dUMP biosynthesis; dUMP from dCTP (dUTP route): step 1/2. Functionally, catalyzes the deamination of dCTP to dUTP. This chain is dCTP deaminase, found in Xanthomonas axonopodis pv. citri (strain 306).